A 300-amino-acid polypeptide reads, in one-letter code: Heme A synthase (300 aa).

Residues 1–8 are Cytoplasmic-facing; it reads MLKEKNLK. Residues 9–29 traverse the membrane as a helical segment; sequence WLSLFTTVLMLFVQIGGALVT. The Extracellular portion of the chain corresponds to 30-64; sequence KTGSADGCGSSWPLCHGKFVPTHIPKETLIELAHR. A disulfide bridge links C37 with C44. E60 is a catalytic residue. A heme o-binding site is contributed by H63. The chain crosses the membrane as a helical span at residues 65 to 85; the sequence is GVSGLALLSVTWLVILSIKYI. Topologically, residues 86–92 are cytoplasmic; it reads GHKKETK. The helical transmembrane segment at 93–113 threads the bilayer; that stretch reads FLCYMSIGFIFAQALIGAAAV. Residues 114 to 123 are Extracellular-facing; the sequence is MWQQNGFVLA. Residues 124–144 traverse the membrane as a helical segment; it reads LHFGISLISFSAVFLLTLLIF. Position 125 (H125) interacts with heme o. Over 145–163 the chain is Cytoplasmic; it reads EVDQKFDATKLILQPKLRR. A helical transmembrane segment spans residues 164 to 184; sequence HTIGLTSFIYFVIYSGALVRH. Residues 185-218 are Extracellular-facing; sequence EKASLACSSWPLCRKGAFILPQNFYEWVQMSHRT. Residues C191 and C197 are joined by a disulfide bond. Position 216 (H216) interacts with heme b. Residues 219-239 traverse the membrane as a helical segment; it reads LAFILFIWLTYVAFHAMRNYA. The Cytoplasmic portion of the chain corresponds to 240–249; it reads QYRVIKYGYM. The helical transmembrane segment at 250–270 threads the bilayer; that stretch reads IAFILICLQVTTGALTIFTAV. At 271–275 the chain is on the extracellular side; that stretch reads NLYIA. Residues 276–296 form a helical membrane-spanning segment; it reads LLHALFITLLFGLLCYFILLI. H278 is a binding site for heme b. The Cytoplasmic portion of the chain corresponds to 297–300; sequence SRAK.

Belongs to the COX15/CtaA family. Type 1 subfamily. Interacts with CtaB. Heme b is required as a cofactor.

Its subcellular location is the cell membrane. The catalysed reaction is Fe(II)-heme o + 2 A + H2O = Fe(II)-heme a + 2 AH2. It functions in the pathway porphyrin-containing compound metabolism; heme A biosynthesis; heme A from heme O: step 1/1. In terms of biological role, catalyzes the conversion of heme O to heme A by two successive hydroxylations of the methyl group at C8. The first hydroxylation forms heme I, the second hydroxylation results in an unstable dihydroxymethyl group, which spontaneously dehydrates, resulting in the formyl group of heme A. The sequence is that of Heme A synthase from Macrococcus caseolyticus (strain JCSC5402) (Macrococcoides caseolyticum).